We begin with the raw amino-acid sequence, 1394 residues long: Adhesion and penetration protein autotransporter (1394 aa).

The first 25 residues, 1-25, serve as a signal peptide directing secretion; sequence MKKTVFRLNFLTACISLGIVSQAWA. The 261-residue stretch at 26–286 folds into the Peptidase S6 domain; sequence GHTYFGIDYQ…QLVRKSYFDE (261 aa). Serine 243 is a catalytic residue. Disordered stretches follow at residues 848 to 870 and 995 to 1027; these read AYSA…TPTS and TLEA…FPDT. The region spanning 1140–1394 is the Autotransporter domain; sequence VDQAQSAVWT…NVGVKLGYRW (255 aa).

The protein resides in the periplasm. Its subcellular location is the secreted. It is found in the cell surface. It localises to the cell outer membrane. In terms of biological role, probable protease; promotes adherence and invasion by directly binding to a host cell structure. The polypeptide is Adhesion and penetration protein autotransporter (hap) (Haemophilus influenzae).